The chain runs to 208 residues: Sodium/potassium-transporting ATPase subunit beta-1-interacting protein 4 (208 aa).

The next 4 helical transmembrane spans lie at leucine 10–leucine 30, alanine 35–leucine 55, valine 62–phenylalanine 82, and alanine 151–phenylalanine 171.

The protein belongs to the NKAIN family. As to quaternary structure, interacts with atp1b1 C-terminus.

It is found in the cell membrane. The chain is Sodium/potassium-transporting ATPase subunit beta-1-interacting protein 4 (nkain4) from Xenopus tropicalis (Western clawed frog).